We begin with the raw amino-acid sequence, 353 residues long: Mitochondrial import inner membrane translocase subunit TIM50 (353 aa).

The N-terminal 44 residues, 1 to 44, are a transit peptide targeting the mitochondrion; the sequence is MAASAAVFSRLRSGLRLGSRGLCTRLATPPRRAPDQAAEIGSRG. The interval 25 to 60 is disordered; that stretch reads RLATPPRRAPDQAAEIGSRGSTKAQGPQQQPGSEGP. Position 45 is a phosphoserine (S45). Residues 45–65 lie on the Mitochondrial matrix side of the membrane; the sequence is STKAQGPQQQPGSEGPSYAKK. The span at 49-60 shows a compositional bias: low complexity; the sequence is QGPQQQPGSEGP. Residues 66–86 traverse the membrane as a helical segment; the sequence is VALWLAGLLGAGGTVSVVYIF. Residues 87–353 are Mitochondrial intermembrane-facing; sequence GNNPVDENGA…SRLWPRSKQP (267 aa). The region spanning 143 to 286 is the FCP1 homology domain; that stretch reads YYQPPYTLVL…LDLSAFLKTI (144 aa). At S341 the chain carries Phosphoserine.

This sequence belongs to the TIM50 family. Component of the TIM23 complex at least composed of TIMM23, TIMM17 (TIMM17A or TIMM17B) and TIMM50; within this complex, directly interacts with TIMM23. The complex interacts with the TIMM44 component of the PAM complex and with DNAJC15. In terms of assembly, interacts with COIL and snRNPs. As to expression, widely expressed. Expressed at higher level in brain, kidney and liver (at protein level).

It localises to the mitochondrion inner membrane. Its subcellular location is the nucleus speckle. Essential component of the TIM23 complex, a complex that mediates the translocation of transit peptide-containing proteins across the mitochondrial inner membrane. Has some phosphatase activity in vitro; however such activity may not be relevant in vivo. Its function is as follows. May participate in the release of snRNPs and SMN from the Cajal body. The protein is Mitochondrial import inner membrane translocase subunit TIM50 (TIMM50) of Homo sapiens (Human).